The following is a 330-amino-acid chain: Methionyl-tRNA formyltransferase (330 aa).

116–119 (SLLP) is a binding site for (6S)-5,6,7,8-tetrahydrofolate.

Belongs to the Fmt family.

It carries out the reaction L-methionyl-tRNA(fMet) + (6R)-10-formyltetrahydrofolate = N-formyl-L-methionyl-tRNA(fMet) + (6S)-5,6,7,8-tetrahydrofolate + H(+). Functionally, attaches a formyl group to the free amino group of methionyl-tRNA(fMet). The formyl group appears to play a dual role in the initiator identity of N-formylmethionyl-tRNA by promoting its recognition by IF2 and preventing the misappropriation of this tRNA by the elongation apparatus. This Nitratidesulfovibrio vulgaris (strain DP4) (Desulfovibrio vulgaris) protein is Methionyl-tRNA formyltransferase.